Reading from the N-terminus, the 171-residue chain is Lipoprotein signal peptidase (171 aa).

3 consecutive transmembrane segments (helical) span residues 7–27 (GLIALLATLALDQASKLWLYF), 64–84 (LGRWLLVAVSLAAVIGLSVWM), and 88–108 (GSRLLAVALGLIVGGALGNAI). Catalysis depends on residues Asp118 and Asp136. Residues 128-148 (SWYVFNVADAAIVAGVVGLIL) form a helical membrane-spanning segment.

The protein belongs to the peptidase A8 family.

It is found in the cell inner membrane. It carries out the reaction Release of signal peptides from bacterial membrane prolipoproteins. Hydrolyzes -Xaa-Yaa-Zaa-|-(S,diacylglyceryl)Cys-, in which Xaa is hydrophobic (preferably Leu), and Yaa (Ala or Ser) and Zaa (Gly or Ala) have small, neutral side chains.. It participates in protein modification; lipoprotein biosynthesis (signal peptide cleavage). Its function is as follows. This protein specifically catalyzes the removal of signal peptides from prolipoproteins. The chain is Lipoprotein signal peptidase from Methylorubrum extorquens (strain PA1) (Methylobacterium extorquens).